The sequence spans 420 residues: O-methyltransferase penK (420 aa).

D285 contributes to the S-adenosyl-L-methionine binding site. Catalysis depends on H325, which acts as the Proton acceptor.

It belongs to the class I-like SAM-binding methyltransferase superfamily. Cation-independent O-methyltransferase family.

Its pathway is secondary metabolite biosynthesis. It functions in the pathway alkaloid biosynthesis. It participates in mycotoxin biosynthesis. Its function is as follows. O-methyltransferase; part of the gene cluster that mediates the biosynthesis of penigequinolones, potent insecticidal alkaloids that contain a highly modified 10-carbon prenyl group. The first stage is catalyzed by the nonribosomal peptide synthetase penN that condenses anthranilic acid and O-methyl-L-tyrosine to produce 4'-methoxycyclopeptin. 4'-methoxycyclopeptin is then converted to 4'-methoxydehydrocyclopeptin by the ketoglutarate-dependent dioxygenase penM through dehydrogenation to form a double bond between C-alpha and C-beta of the O-methyltyrosine side chain. PenM also converts its first product methoxydehydrocyclopeptin to 4'-methoxycyclopenin. The following conversion of 4'methoxycyclopenin into 4'-methoxyviridicatin is catalyzed by the cyclopenase penL. 4'-methoxyviridicatin is the precursor of quinolone natural products, and is further converted to quinolinone B. The prenyltransferase penI then catalyzes the canonical Friedel-Crafts alkylation of quinolinone B with dimethylallyl cation to yield dimethylallyl quinolone, which is subjected to FAD-dependent dehydrogenation by the FAD-linked oxidoreductase penH to yield conjugated aryl diene. The delta(3') double bond then serves as the site of the second alkylation with DMAPP catalyzed by the prenyltransferase penG to yield a carbenium ion intermediate, which can be attacked by H(2)O to yield a styrenyl quinolone containing a C3'-hydroxyprenyl chain, or undergo cyclization to yield yaequinolones J1 and J2. The conversion of the styrenyl quinolone into the tetrahydrofuran-containing yaequinolone C is performed by the FAD-dependent monooxygenase penE and involves epoxidation of the terminal C7'-C8' olefin, followed by epoxide ring opening initiated by the C3' hydroxyl group. The predicted cysteine hydrolase penJ acts as an epoxide hydrolase that enhances the rate of the 5-exo-tet cyclization step, increasing the yield of yaequinolone C. PenF catalyzes the cationic rearrangement of the epoxide formed by penE (before ring opening to produce yaequinolone C) into yaequinolone D. Finally, the short-chain dehydrogenase/reductase (SDR)-like reductase penD, catalyzes both the dehydration of yaequinolone D and the reduction of the resulting oxonium to yield penigequinolone. The protein is O-methyltransferase penK of Penicillium thymicola.